The sequence spans 207 residues: LPS-assembly lipoprotein LptE (207 aa).

The first 19 residues, 1 to 19 (MRHRILMLLLGLAVLVTAG), serve as a signal peptide directing secretion. The N-palmitoyl cysteine moiety is linked to residue cysteine 20. Residue cysteine 20 is the site of S-diacylglycerol cysteine attachment.

The protein belongs to the LptE lipoprotein family. Component of the lipopolysaccharide transport and assembly complex. Interacts with LptD.

Its subcellular location is the cell outer membrane. In terms of biological role, together with LptD, is involved in the assembly of lipopolysaccharide (LPS) at the surface of the outer membrane. Required for the proper assembly of LptD. Binds LPS and may serve as the LPS recognition site at the outer membrane. The chain is LPS-assembly lipoprotein LptE from Yersinia enterocolitica serotype O:8 / biotype 1B (strain NCTC 13174 / 8081).